A 196-amino-acid chain; its full sequence is Carnitine operon protein CaiE (196 aa).

The interval 174–196 is disordered; sequence QPLRQMEENRPRLQGTTDVTPKR. Residues 187–196 show a composition bias toward polar residues; it reads QGTTDVTPKR.

Belongs to the transferase hexapeptide repeat family.

It participates in amine and polyamine metabolism; carnitine metabolism. Functionally, overproduction of CaiE stimulates the activity of CaiB and CaiD. This Escherichia coli (strain K12) protein is Carnitine operon protein CaiE (caiE).